The chain runs to 558 residues: uncharacterized protein (558 aa).

The next 5 helical transmembrane spans lie at 15–32, 39–61, 76–95, 104–126, and 166–188; these read PSVT…ALGL, IGTI…HFGV, LVIF…FPSL, LISL…ILGI, and MALA…LALL. RCK C-terminal domains lie at 196 to 278 and 286 to 370; these read EERD…LFGK and RPDI…ILGD. Transmembrane regions (helical) follow at residues 383–405, 409–426, 446–468, 473–495, and 533–555; these read LFGG…GVSM, LGLA…GAFG, FGII…DTII, LLWV…WASI, and VVYA…IMIL.

Belongs to the AAE transporter (TC 2.A.81) family.

The protein localises to the cell membrane. This is an uncharacterized protein from Porphyromonas gingivalis (strain ATCC BAA-308 / W83).